Consider the following 162-residue polypeptide: Deoxyuridine 5'-triphosphate nucleotidohydrolase (162 aa).

This sequence belongs to the dUTPase family. Homotrimer. Mg(2+) serves as cofactor.

It localises to the host cytoplasm. The protein resides in the virion. It catalyses the reaction dUTP + H2O = dUMP + diphosphate + H(+). Its function is as follows. The viral dUTPase may play a role in lowering the dUTP concentration in natural infections to minimize misincorporation of deoxyuridine into the viral DNA and ensure the fidelity of genome replication. The polypeptide is Deoxyuridine 5'-triphosphate nucleotidohydrolase (Ornithodoros (relapsing fever ticks)).